The following is a 355-amino-acid chain: S-adenosylmethionine:tRNA ribosyltransferase-isomerase (355 aa).

Belongs to the QueA family. Monomer.

Its subcellular location is the cytoplasm. It catalyses the reaction 7-aminomethyl-7-carbaguanosine(34) in tRNA + S-adenosyl-L-methionine = epoxyqueuosine(34) in tRNA + adenine + L-methionine + 2 H(+). It participates in tRNA modification; tRNA-queuosine biosynthesis. Functionally, transfers and isomerizes the ribose moiety from AdoMet to the 7-aminomethyl group of 7-deazaguanine (preQ1-tRNA) to give epoxyqueuosine (oQ-tRNA). This chain is S-adenosylmethionine:tRNA ribosyltransferase-isomerase, found in Erwinia tasmaniensis (strain DSM 17950 / CFBP 7177 / CIP 109463 / NCPPB 4357 / Et1/99).